The chain runs to 61 residues: Large ribosomal subunit protein bL32 (61 aa).

Residues 1 to 16 show a composition bias toward basic residues; it reads MAVPKRKTSPSRRGMR. Residues 1-44 are disordered; the sequence is MAVPKRKTSPSRRGMRRSADALKAPTYVEDKDSGELRRPHHIDL. Basic and acidic residues predominate over residues 28–44; it reads VEDKDSGELRRPHHIDL.

Belongs to the bacterial ribosomal protein bL32 family.

The protein is Large ribosomal subunit protein bL32 of Methylobacterium nodulans (strain LMG 21967 / CNCM I-2342 / ORS 2060).